The primary structure comprises 161 residues: Nucleotide-binding protein Bpro_1596 (161 aa).

It belongs to the YajQ family.

Nucleotide-binding protein. This Polaromonas sp. (strain JS666 / ATCC BAA-500) protein is Nucleotide-binding protein Bpro_1596.